We begin with the raw amino-acid sequence, 355 residues long: S-adenosylmethionine:tRNA ribosyltransferase-isomerase (355 aa).

The protein belongs to the QueA family. As to quaternary structure, monomer.

It localises to the cytoplasm. The enzyme catalyses 7-aminomethyl-7-carbaguanosine(34) in tRNA + S-adenosyl-L-methionine = epoxyqueuosine(34) in tRNA + adenine + L-methionine + 2 H(+). It functions in the pathway tRNA modification; tRNA-queuosine biosynthesis. Functionally, transfers and isomerizes the ribose moiety from AdoMet to the 7-aminomethyl group of 7-deazaguanine (preQ1-tRNA) to give epoxyqueuosine (oQ-tRNA). The polypeptide is S-adenosylmethionine:tRNA ribosyltransferase-isomerase (Aeromonas salmonicida (strain A449)).